The chain runs to 292 residues: Acetylglutamate kinase (292 aa).

Residues 72–73 (GG), R94, and N187 contribute to the substrate site.

This sequence belongs to the acetylglutamate kinase family. ArgB subfamily.

Its subcellular location is the cytoplasm. It catalyses the reaction N-acetyl-L-glutamate + ATP = N-acetyl-L-glutamyl 5-phosphate + ADP. Its pathway is amino-acid biosynthesis; L-arginine biosynthesis; N(2)-acetyl-L-ornithine from L-glutamate: step 2/4. Catalyzes the ATP-dependent phosphorylation of N-acetyl-L-glutamate. The sequence is that of Acetylglutamate kinase from Trichodesmium erythraeum (strain IMS101).